The following is a 189-amino-acid chain: Peptidyl-tRNA hydrolase (189 aa).

Residue Y14 participates in tRNA binding. The active-site Proton acceptor is H19. Positions 64, 66, and 112 each coordinate tRNA.

Belongs to the PTH family. Monomer.

It is found in the cytoplasm. The catalysed reaction is an N-acyl-L-alpha-aminoacyl-tRNA + H2O = an N-acyl-L-amino acid + a tRNA + H(+). Its function is as follows. Hydrolyzes ribosome-free peptidyl-tRNAs (with 1 or more amino acids incorporated), which drop off the ribosome during protein synthesis, or as a result of ribosome stalling. Catalyzes the release of premature peptidyl moieties from peptidyl-tRNA molecules trapped in stalled 50S ribosomal subunits, and thus maintains levels of free tRNAs and 50S ribosomes. The polypeptide is Peptidyl-tRNA hydrolase (Clostridium botulinum (strain 657 / Type Ba4)).